The chain runs to 59 residues: MARYRRNRSRSRSRRRRRRRGGRGGRRGRRRRRHGQRRRGRRGRERTRRRRRRRRRSSS.

The tract at residues methionine 1–serine 59 is disordered.

Belongs to the protamine P1 family. In terms of tissue distribution, testis.

The protein resides in the nucleus. Its subcellular location is the chromosome. Functionally, protamines substitute for histones in the chromatin of sperm during the haploid phase of spermatogenesis. They compact sperm DNA into a highly condensed, stable and inactive complex. The sequence is that of Sperm protamine P1-type from Chrysemys picta bellii (Western painted turtle).